Consider the following 553-residue polypeptide: Effector protein HopAB2 (553 aa).

Disordered stretches follow at residues Met-1 to Arg-123, Ala-198 to Gln-227, and Ala-239 to Arg-275. The host recognition; Pto interaction stretch occupies residues Met-1–Met-308. The segment covering Ser-24–Ser-39 has biased composition (low complexity). The span at Ser-47–Thr-60 shows a compositional bias: pro residues. Over residues Ser-217–Gln-227 the composition is skewed to low complexity. The span at Gln-242 to Val-255 shows a compositional bias: polar residues. Residues Gln-309–Pro-553 form an E3 ubiquitin-protein ligase region. The short motif at Gly-325–Pro-328 is the Interaction with Pto-kinase element. Residues Ala-361–Thr-380 are disordered. The segment at Lys-512 to Lys-529 is required for E3 ubiquitin-protein ligase and anti-PCD activities and pathogenesis.

Belongs to the HopAB family. In terms of assembly, interacts physically with plant cell Pto. Post-translationally, auto-ubiquitinated.

It localises to the secreted. Functionally, effector protein involved in gene-for-gene resistance in tomato plants. It is recognized by the host Pto resistance protein and elicits Pto and Prf-dependent hypersensitive response (HR) and programmed cell death (PCD), resulting in host immunity. In susceptible plants, acts as a virulence factor by suppressing PCD and HR-based plant immunity. This function requires its E3 ubiquitin ligase activity probably by recruiting E2 enzymes and transferring ubiquitin molecules to cellular proteins involved in regulation of PCD and targeting them for degradation. Also, induces expression of host genes involved in ethylene biosynthesis and signaling, in particular ACO1 and ACO2, encoding the ethylene-forming enzyme ACC oxidase. This Pseudomonas syringae pv. tomato (strain ATCC BAA-871 / DC3000) protein is Effector protein HopAB2 (hopAB2).